Here is a 313-residue protein sequence, read N- to C-terminus: Sideroflexin-4 (313 aa).

The next 2 helical transmembrane spans lie at 87–107 (AAFLPVTAPMVFLLMMPDTGI) and 141–161 (TLLGAGVSVSSTFIGLIPHLF). The residue at position 173 (lysine 173) is an N6-acetyllysine. 3 helical membrane-spanning segments follow: residues 175-191 (TLPIVFLAQVSGMNVFA), 230-247 (AVLFGTSALAPELFIHIF), and 269-289 (FFMMGLMVPVSFSMFPQIGQI).

The protein belongs to the sideroflexin family. Largely restricted to kidney, brain and heart.

The protein resides in the mitochondrion inner membrane. Functionally, mitochondrial amino-acid transporter. Does not act as a serine transporter: not able to mediate transport of serine into mitochondria. The sequence is that of Sideroflexin-4 from Mus musculus (Mouse).